We begin with the raw amino-acid sequence, 436 residues long: Adenylosuccinate synthetase (436 aa).

Residues 22–28 and 50–52 each bind GTP; these read GDEGKGK and GHE. Residue D23 is the Proton acceptor of the active site. The Mg(2+) site is built by D23 and G50. IMP contacts are provided by residues 23 to 26, 48 to 51, T141, R155, N231, T246, and R310; these read DEGK and NAGH. The active-site Proton donor is H51. 306-312 provides a ligand contact to substrate; that stretch reads VSTARVR. GTP contacts are provided by residues R312, 338–340, and 424–426; these read KMD and GVG.

Belongs to the adenylosuccinate synthetase family. Homodimer. It depends on Mg(2+) as a cofactor.

Its subcellular location is the cytoplasm. The enzyme catalyses IMP + L-aspartate + GTP = N(6)-(1,2-dicarboxyethyl)-AMP + GDP + phosphate + 2 H(+). Its pathway is purine metabolism; AMP biosynthesis via de novo pathway; AMP from IMP: step 1/2. Its function is as follows. Plays an important role in the salvage pathway for purine nucleotide biosynthesis. Catalyzes the first committed step in the biosynthesis of AMP from IMP. The chain is Adenylosuccinate synthetase from Babesia bovis.